We begin with the raw amino-acid sequence, 251 residues long: Probable transcriptional regulatory protein MLBr00475 (251 aa).

It belongs to the TACO1 family.

The protein resides in the cytoplasm. The chain is Probable transcriptional regulatory protein MLBr00475 from Mycobacterium leprae (strain Br4923).